The following is a 644-amino-acid chain: Exoribonuclease 2 (644 aa).

In terms of domain architecture, RNB spans 189–516 (REDLTALDFV…NHRLLKAVIK (328 aa)). Residues 561 to 643 (DTRFAAEIVD…ETRSIIARPV (83 aa)) form the S1 motif domain.

Belongs to the RNR ribonuclease family. RNase II subfamily.

It is found in the cytoplasm. The catalysed reaction is Exonucleolytic cleavage in the 3'- to 5'-direction to yield nucleoside 5'-phosphates.. In terms of biological role, involved in mRNA degradation. Hydrolyzes single-stranded polyribonucleotides processively in the 3' to 5' direction. The sequence is that of Exoribonuclease 2 from Escherichia coli O139:H28 (strain E24377A / ETEC).